Reading from the N-terminus, the 229-residue chain is V-type proton ATPase subunit E (229 aa).

It belongs to the V-ATPase E subunit family. As to quaternary structure, V-ATPase is a heteromultimeric enzyme composed of a peripheral catalytic V1 complex (components A to H) attached to an integral membrane V0 proton pore complex (components: a, c, c', c'' and d).

Functionally, subunit of the peripheral V1 complex of vacuolar ATPase essential for assembly or catalytic function. V-ATPase is responsible for acidifying a variety of intracellular compartments in eukaryotic cells. This chain is V-type proton ATPase subunit E (VATE), found in Spinacia oleracea (Spinach).